Reading from the N-terminus, the 88-residue chain is Small ribosomal subunit protein bS18 (88 aa).

Belongs to the bacterial ribosomal protein bS18 family. In terms of assembly, part of the 30S ribosomal subunit. Forms a tight heterodimer with protein bS6.

In terms of biological role, binds as a heterodimer with protein bS6 to the central domain of the 16S rRNA, where it helps stabilize the platform of the 30S subunit. This Syntrophus aciditrophicus (strain SB) protein is Small ribosomal subunit protein bS18.